The chain runs to 1032 residues: Structural polyprotein (1032 aa).

D23 contacts a divalent metal cation. A Peptidase S50 domain is found at 501–723 (ADSPLGEEHW…QTLPHWTAGS (223 aa)). The Nucleophile role is filled by S627. Residue K670 is part of the active site. The tract at residues 986 to 1014 (LVNQPATAPRVPPRRIVSAQTAQTDPPGR) is disordered. The interaction with VP1 protein stretch occupies residues 1021 to 1030 (LRRVRGEDND).

Homotrimer. A central divalent metal stabilizes the VP2 trimer. In terms of assembly, homodimer. Interacts (via C-terminus) with VP1 in the cytoplasm. Capsid VP3 interacts with VP2. Post-translationally, specific enzymatic cleavages yield mature proteins. The capsid assembly seems to be regulated by polyprotein processing. The protease VP4 cleaves itself off the polyprotein, thus releasing pre-VP2 and VP3 within the infected cell. During capsid assembly, the C-terminus of pre-VP2 is further processed by VP4, giving rise to VP2, the external capsid protein and three small peptides that all stay closely associated with the capsid.

The protein resides in the virion. The protein localises to the host cytoplasm. Functionally, capsid protein VP2 self assembles to form an icosahedral capsid with a T=13 symmetry, about 70 nm in diameter, and consisting of 260 VP2 trimers. The capsid encapsulates the genomic dsRNA. VP2 is also involved in attachment and entry into the host cell. Its function is as follows. The precursor of VP2 plays an important role in capsid assembly. First, pre-VP2 and VP2 oligomers assemble to form a procapsid. Then, the pre-VP2 intermediates may be processed into VP2 proteins by proteolytic cleavage mediated by VP4 to obtain the mature virion. The final capsid is composed of pentamers and hexamers but VP2 has a natural tendency to assemble into all-pentameric structures. Therefore pre-VP2 may be required to allow formation of the hexameric structures. Protease VP4 is a serine protease that cleaves the polyprotein into its final products. Pre-VP2 is first partially cleaved, and may be completely processed by VP4 upon capsid maturation. In terms of biological role, capsid protein VP3 plays a key role in virion assembly by providing a scaffold for the capsid made of VP2. May self-assemble to form a T=4-like icosahedral inner-capsid composed of at least 180 trimers. Plays a role in genomic RNA packaging by recruiting VP1 into the capsid and interacting with the dsRNA genome segments to form a ribonucleoprotein complex. Additionally, the interaction of the VP3 C-terminal tail with VP1 removes the inherent structural blockade of the polymerase active site. Thus, VP3 can also function as a transcriptional activator. Functionally, structural peptide 1 is a small peptide derived from pre-VP2 C-terminus. It destabilizes and perforates cell membranes, suggesting a role during entry. Its function is as follows. Structural peptide 2 is a small peptide derived from pre-VP2 C-terminus. It is not essential for the virus viability, but viral growth is affected when missing. Structural peptide 3 is a small peptide derived from pre-VP2 C-terminus. It is not essential for the virus viability, but viral growth is affected when missing. The sequence is that of Structural polyprotein from Drosophila melanogaster (Fruit fly).